A 783-amino-acid chain; its full sequence is Polyribonucleotide nucleotidyltransferase 1, mitochondrial (783 aa).

The transit peptide at 1-45 directs the protein to the mitochondrion; it reads MAACRLCCLCPCLRPLGCGPLGRPGRNRALSYLQMRALWSSTGSR. N6-acetyllysine is present on residues Lys-250, Lys-264, and Lys-285. Residue Lys-552 is modified to N6-succinyllysine. Residues 605 to 664 enclose the KH domain; it reads PVVETVKVPLSKRAKFVGPGGYHLKKLQAETGVTISQVDEETFSIFAPTPTAMHEARDFI. Residues 679-750 form the S1 motif domain; that stretch reads GAVYTATITE…ADGRMRLSRK (72 aa). A Phosphoserine modification is found at Ser-754.

The protein belongs to the polyribonucleotide nucleotidyltransferase family. In terms of assembly, homotrimer; in free form. Homooligomer. Component of the mitochondrial degradosome (mtEXO) complex which is a heteropentamer containing 2 copies of SUPV3L1 and 3 copies of PNPT1. As part of the mitochondrial degradosome complex, interacts with GRSF1 in an RNA-dependent manner; the interaction enhances the activity of the complex. Interacts with TCL1A; the interaction has no effect on PNPT1 exonuclease activity.

Its subcellular location is the cytoplasm. It localises to the mitochondrion matrix. The protein resides in the mitochondrion intermembrane space. The catalysed reaction is RNA(n+1) + phosphate = RNA(n) + a ribonucleoside 5'-diphosphate. Its function is as follows. RNA-binding protein implicated in numerous RNA metabolic processes. Catalyzes the phosphorolysis of single-stranded polyribonucleotides processively in the 3'-to-5' direction. Mitochondrial intermembrane factor with RNA-processing exoribonulease activity. Component of the mitochondrial degradosome (mtEXO) complex, that degrades 3' overhang double-stranded RNA with a 3'-to-5' directionality in an ATP-dependent manner. Involved in the degradation of non-coding mitochondrial transcripts (MT-ncRNA) and tRNA-like molecules. Required for correct processing and polyadenylation of mitochondrial mRNAs. Plays a role as a cytoplasmic RNA import factor that mediates the translocation of small RNA components, like the 5S RNA, the RNA subunit of ribonuclease P and the mitochondrial RNA-processing (MRP) RNA, into the mitochondrial matrix. Plays a role in mitochondrial morphogenesis and respiration; regulates the expression of the electron transport chain (ETC) components at the mRNA and protein levels. In the cytoplasm, shows a 3'-to-5' exoribonuclease mediating mRNA degradation activity; degrades c-myc mRNA upon treatment with IFNB1/IFN-beta, resulting in a growth arrest in melanoma cells. Regulates the stability of specific mature miRNAs in melanoma cells; specifically and selectively degrades miR-221, preferentially. Also plays a role in RNA cell surveillance by cleaning up oxidized RNAs. Binds to the RNA subunit of ribonuclease P, MRP RNA and miR-221 microRNA. In Mus musculus (Mouse), this protein is Polyribonucleotide nucleotidyltransferase 1, mitochondrial (Pnpt1).